Reading from the N-terminus, the 213-residue chain is Small ribosomal subunit protein uS4 (213 aa).

Residues Gly-16 to Ser-53 are disordered. Residues Val-44 to Ser-53 are compositionally biased toward polar residues. Positions Ser-97–Lys-163 constitute an S4 RNA-binding domain.

The protein belongs to the universal ribosomal protein uS4 family. In terms of assembly, part of the 30S ribosomal subunit. Contacts protein S5. The interaction surface between S4 and S5 is involved in control of translational fidelity.

Functionally, one of the primary rRNA binding proteins, it binds directly to 16S rRNA where it nucleates assembly of the body of the 30S subunit. With S5 and S12 plays an important role in translational accuracy. The chain is Small ribosomal subunit protein uS4 from Psychrobacter cryohalolentis (strain ATCC BAA-1226 / DSM 17306 / VKM B-2378 / K5).